Reading from the N-terminus, the 613-residue chain is Histone acetyltransferase KAT7 (613 aa).

A disordered region spans residues 1-175 (MAIGVVKRNA…SDLSHRPKRR (175 aa)). A phosphoserine mark is found at Ser-12, Ser-52, Ser-55, Ser-59, and Ser-66. Low complexity predominate over residues 44 to 59 (VTRSSARLSQSSQDSS). Phosphothreonine is present on residues Thr-87 and Thr-90. The span at 98–107 (QTRSSGSETE) shows a compositional bias: polar residues. Ser-104 carries the post-translational modification Phosphoserine. Thr-106 carries the phosphothreonine modification. A compositionally biased stretch (basic and acidic residues) spans 112-127 (FSDRETKNTADHDESP). Phosphoserine occurs at positions 113 and 126. The residue at position 130 (Thr-130) is a Phosphothreonine. Low complexity predominate over residues 136–147 (PSSESDIDISSP). Over residues 150-170 (SHDESIAKDMSLKDSGSDLSH) the composition is skewed to basic and acidic residues. Residues Ser-160, Ser-164, Ser-166, and Ser-180 each carry the phosphoserine modification. Residues 178–221 (HESYNFNMKCPTPGCNSLGHLTGKHERHFSISGCPLYHNLSADE) form a CCHHC-type zinc finger. 2 positions are modified to N6-acetyllysine: Lys-201 and Lys-279. Residue Lys-325 forms a Glycyl lysine isopeptide (Lys-Gly) (interchain with G-Cter in SUMO2) linkage. The MYST-type HAT domain maps to 334-609 (EGSNMIKTIA…MDPSCLKWTP (276 aa)). Residue Lys-340 forms a Glycyl lysine isopeptide (Lys-Gly) (interchain with G-Cter in ubiquitin) linkage. The C2HC MYST-type zinc finger occupies 367-392 (LYMCEFCLKYMKSQTILRRHMAKCVW). Residues Cys-370, Cys-373, His-386, and Cys-390 each coordinate Zn(2+). Lys-434 carries the N6-acetyllysine; by autocatalysis modification. Residues 477 to 479 (ILT) and 485 to 490 (RQGYGK) each bind acetyl-CoA. Ser-508 carries the post-translational modification Phosphoserine. Catalysis depends on Glu-510, which acts as the Proton donor/acceptor. Positions 514 and 523 each coordinate acetyl-CoA.

This sequence belongs to the MYST (SAS/MOZ) family. Component of the HBO1 complex composed of KAT7/HBO1, MEAF6, ING4 or ING5, and one scaffold subunit: complexes containing BRPF scaffold (BRPF1, BRD1/BRPF2 or BRPF3) direct KAT7/HBO1 specificity towards H3K14ac, while complexes containing JADE scaffold (JADE1, JADE2 and JADE3) mediate acetylation of histone H4. Interacts with MCM2 and ORC1. Interacts with the androgen receptor (AR) in the presence of dihydrotestosterone. Interacts with CDT1. Interacts with MAP2K1 and CUL1. Interacts with p53/TP53; leading to inhibit histone acetyltransferase activity. Post-translationally, phosphorylated at Ser-52 and Ser-55 by ATR in response to DNA damage, promoting its ubiquitination by the CRL4(DDB2) complex and subsequent degradation. Phosphorylation at Ser-52 and Ser-55 by ATR in response to ultraviolet-induced DNA, promotes localization to DNA damage sites. Phosphorylation at Ser-59 by PLK1 during mitosis seems important for prereplicative complex formation and DNA replication licensing, and requires prior phosphorylation at Thr-87 and Thr-90 by CDK1. Phosphorylated by MAP2K1, which accelerates its degradation. In terms of processing, ubiquitinated at Lys-340, leading to proteasomal degradation. Ubiquitinated by the CRL4(DDB2) complex following phosphorylation by ATR, leading to its subsequent degradation. Autoacetylation at Lys-434 is required for proper function. Widely expressed in adult tissues.

The protein localises to the nucleus. Its subcellular location is the chromosome. The protein resides in the centromere. It is found in the cytoplasm. It localises to the cytosol. It carries out the reaction L-lysyl-[protein] + acetyl-CoA = N(6)-acetyl-L-lysyl-[protein] + CoA + H(+). With respect to regulation, histone acetyltransferase activity is inhibited by GMNN in the context of a complex with CDT1, inhibiting histone H4 acetylation and DNA replication licensing. In terms of biological role, catalytic subunit of histone acetyltransferase HBO1 complexes, which specifically mediate acetylation of histone H3 at 'Lys-14' (H3K14ac), thereby regulating various processes, such as gene transcription, protein ubiquitination, immune regulation, stem cell pluripotent and self-renewal maintenance and embryonic development. Some complexes also catalyze acetylation of histone H4 at 'Lys-5', 'Lys-8' and 'Lys-12' (H4K5ac, H4K8ac and H4K12ac, respectively), regulating DNA replication initiation, regulating DNA replication initiation. Specificity of the HBO1 complexes is determined by the scaffold subunit: complexes containing BRPF scaffold (BRPF1, BRD1/BRPF2 or BRPF3) direct KAT7/HBO1 specificity towards H3K14ac, while complexes containing JADE (JADE1, JADE2 and JADE3) scaffold direct KAT7/HBO1 specificity towards histone H4. H3K14ac promotes transcriptional elongation by facilitating the processivity of RNA polymerase II. Acts as a key regulator of hematopoiesis by forming a complex with BRD1/BRPF2, directing KAT7/HBO1 specificity towards H3K14ac and promoting erythroid differentiation. H3K14ac is also required for T-cell development. KAT7/HBO1-mediated acetylation facilitates two consecutive steps, licensing and activation, in DNA replication initiation: H3K14ac facilitates the activation of replication origins, and histone H4 acetylation (H4K5ac, H4K8ac and H4K12ac) facilitates chromatin loading of MCM complexes, promoting DNA replication licensing. Acts as a positive regulator of centromeric CENPA assembly: recruited to centromeres and mediates histone acetylation, thereby preventing centromere inactivation mediated by SUV39H1, possibly by increasing histone turnover/exchange. Involved in nucleotide excision repair: phosphorylation by ATR in response to ultraviolet irradiation promotes its localization to DNA damage sites, where it mediates histone acetylation to facilitate recruitment of XPC at the damaged DNA sites. Acts as an inhibitor of NF-kappa-B independently of its histone acetyltransferase activity. Plays a central role in the maintenance of leukemia stem cells in acute myeloid leukemia (AML). Acts by mediating acetylation of histone H3 at 'Lys-14' (H3K14ac), thereby facilitating the processivity of RNA polymerase II to maintain the high expression of key genes, such as HOXA9 and HOXA10 that help to sustain the functional properties of leukemia stem cells. The polypeptide is Histone acetyltransferase KAT7 (Mus musculus (Mouse)).